The chain runs to 733 residues: Zinc finger protein indra (733 aa).

Residues 17 to 91 form the ZAD domain; the sequence is VRCDHCGTSQ…RETVDRVQEQ (75 aa). 4 residues coordinate Zn(2+): C19, C22, C64, and C67. The segment covering 90–100 has biased composition (basic and acidic residues); the sequence is EQPAKKTKVAE. Positions 90–121 are disordered; it reads EQPAKKTKVAEIEEPSTQESDKKAVKVPKKNT. Residues S109, S153, and S176 each carry the phosphoserine modification. 2 positions are modified to phosphothreonine: T180 and T188. C2H2-type zinc fingers lie at residues 228–251 and 259–282; these read FQCPECEFHAKFPKPYKEHLQKEH and YPCTLCIKTFGVLKTLKNHLRDTH. Residues 285–316 show a composition bias toward basic and acidic residues; sequence TFESEAKTKAKESKEKEAKSGAKNKIDAKAKE. The disordered stretch occupies residues 285 to 336; it reads TFESEAKTKAKESKEKEAKSGAKNKIDAKAKETNAVSQRKKPKEKKSKEKKT. C2H2-type zinc fingers lie at residues 416–439 and 447–469; these read FQCEICDCELMTAKQMQEHMKTVH and FKCHVCEKSLATKQSLKTHMTLH. Disordered regions lie at residues 499-525 and 540-622; these read IENTAEKVEGPKKSQQSPTKAAKFTNR and AFKT…SSDV. Polar residues predominate over residues 592-602; it reads SVSTTNGNSPA. Residues S600, S642, and S646 each carry the phosphoserine modification. The residue at position 647 (T647) is a Phosphothreonine. 2 consecutive C2H2-type zinc fingers follow at residues 653–676 and 708–733; these read LSCDRCGKFVKSRQRLDSHMEKKH and LPCGVANCKKVFTEANFLSSHLRKRH. Position 654 is a phosphoserine (S654).

Belongs to the krueppel C2H2-type zinc-finger protein family.

Its subcellular location is the nucleus. The protein resides in the nucleolus. Functionally, required for rDNA copy number maintenance and non-random sister chromatid segregation (NRSS) following unequal sister chromatid exchange. Binds ribosomal DNA (rDNA) preferentially binding to intergenic spacers (IGS) regions on both X and Y chromosomes. Essential for NRSS, a mechanism which contributes to the recovery and maintenance of inherently unstable rDNA copy numbers so that the integrity of the germline genome is upheld over generations and germline immortality is sustained. May be involved in transcriptional regulation. This is Zinc finger protein indra from Drosophila melanogaster (Fruit fly).